The sequence spans 141 residues: Photosystem I reaction center subunit IV A, chloroplastic (141 aa).

A chloroplast-targeting transit peptide spans M1–R49. Residues P57–A73 are compositionally biased toward low complexity. Residues P57 to G83 form a disordered region.

Belongs to the PsaE family. In terms of processing, 2 isoforms exists (ratio 1:1). With or without the N-terminal alanine.

Its subcellular location is the plastid. The protein resides in the chloroplast thylakoid membrane. In terms of biological role, stabilizes the interaction between PsaC and the PSI core, assists the docking of the ferredoxin to PSI and interacts with ferredoxin-NADP oxidoreductase. This chain is Photosystem I reaction center subunit IV A, chloroplastic (PSAEA), found in Nicotiana sylvestris (Wood tobacco).